We begin with the raw amino-acid sequence, 39 residues long: Basic phospholipase A2 (39 aa).

Ca(2+)-binding residues include Y27, G29, and G31.

It belongs to the phospholipase A2 family. Group II subfamily. D49 sub-subfamily. Ca(2+) is required as a cofactor. As to expression, expressed by the venom gland.

The protein resides in the secreted. The enzyme catalyses a 1,2-diacyl-sn-glycero-3-phosphocholine + H2O = a 1-acyl-sn-glycero-3-phosphocholine + a fatty acid + H(+). Its activity is regulated as follows. Is selectively inhibited by the gamma-phospholipase A2 inhibitor (PLI) CgMIP-I (AC P0DQP7) but not by the alpha-PLI CgMIP-II (AC P0DQP8). Its function is as follows. Snake venom phospholipase A2 (PLA2) that shows high myotoxic activities, induces mild edema, and shows cytolytic, and anti-coagulant activities, as well as intracerebral lethal effect. Does not induce lethality at a dose of 5 ug/g, when intravenously injected into mice. PLA2 catalyzes the calcium-dependent hydrolysis of the 2-acyl groups in 3-sn-phosphoglycerides. In Cerrophidion godmani (Porthidium godmani), this protein is Basic phospholipase A2.